The chain runs to 382 residues: GDP-mannose-dependent alpha-(1-6)-phosphatidylinositol monomannoside mannosyltransferase (382 aa).

4 residues coordinate GDP-alpha-D-mannose: Arg200, Lys205, Ile257, and Glu294.

Belongs to the glycosyltransferase group 1 family. Glycosyltransferase 4 subfamily.

The catalysed reaction is a 1,2-diacyl-sn-glycero-3-phospho-[alpha-D-mannopyranosyl-(1&lt;-&gt;6)-D-myo-inositol] + GDP-alpha-D-mannose = a 2,6-O-bis(alpha-D-mannopyranosyl)-1-phosphatidyl-1D-myo-inositol + GDP + H(+). It catalyses the reaction a 1,2-diacyl-sn-glycero-3-phospho-[alpha-D-6-acyl-mannopyranosyl-(1&lt;-&gt;6)-D-myo-inositol] + GDP-alpha-D-mannose = a 2-O-(alpha-D-mannosyl)-6-O-(6-O-acyl-alpha-D-mannosyl)-1-phosphatidyl-1D-myo-inositol + GDP + H(+). Its pathway is phospholipid metabolism; phosphatidylinositol metabolism. In terms of biological role, involved in the biosynthesis of phosphatidyl-myo-inositol mannosides (PIM) which are early precursors in the biosynthesis of lipomannans (LM) and lipoarabinomannans (LAM). Catalyzes the addition of a mannosyl residue from GDP-D-mannose (GDP-Man) to the position 6 of a phosphatidyl-myo-inositol bearing an alpha-1,2-linked mannose residue (PIM1) to generate phosphatidyl-myo-inositol bearing alpha-1,2- and alpha-1,6-linked mannose residues (Ac1PIM2). PimB also catalyzes the addition of a mannosyl residue from GDP-Man to the position 6 of phosphatidyl-myo-inositol bearing an acylated alpha-1,2-linked mannose residue (Ac1PIM1) to generate monoacylated phosphatidyl-myo-inositol bearing alpha-1,2- and alpha-1,6-linked mannose residues (Ac1PIM2). The addition of the second mannosyl residue by PimB preferentially occurs before the acylation of the mannosyl residue transferred by PimA. Also able to transfer a mannosyl residue from GDP-Man to the position 6 of a phosphatidyl-myo-inositol (PI), but this reaction is very slow. In Mycolicibacterium smegmatis (strain ATCC 700084 / mc(2)155) (Mycobacterium smegmatis), this protein is GDP-mannose-dependent alpha-(1-6)-phosphatidylinositol monomannoside mannosyltransferase.